Here is an 848-residue protein sequence, read N- to C-terminus: Trimethylamine-N-oxide reductase 1 (848 aa).

The tat-type signal signal peptide spans 1–39 (MNNNDLFQASRRRFLAQLGGLTVAGMLGPSLLTPRRATA). S191 serves as a coordination point for Mo-bis(molybdopterin guanine dinucleotide).

It belongs to the prokaryotic molybdopterin-containing oxidoreductase family. As to quaternary structure, interacts with the N-terminal domain of TorC. The cofactor is Mo-bis(molybdopterin guanine dinucleotide). In terms of processing, exported by the Tat system. The position of the signal peptide cleavage has been experimentally proven.

The protein localises to the periplasm. The enzyme catalyses trimethylamine + 2 Fe(III)-[cytochrome c] + H2O = trimethylamine N-oxide + 2 Fe(II)-[cytochrome c] + 3 H(+). Its function is as follows. Reduces trimethylamine-N-oxide (TMAO) into trimethylamine; an anaerobic reaction coupled to energy-yielding reactions. The chain is Trimethylamine-N-oxide reductase 1 (torA) from Escherichia coli (strain K12).